A 657-amino-acid chain; its full sequence is MSSSNDHVLVPMSQRNKNGLPGMSSRGARTLAEGDVLSFHHITYRVKVKSGFLVRKTAEKEILSDINGIMKPGLNAILGPTGGGKSSLLDVLAARKDPRGLSGDVLINGAPQPANFKCSSGYVVQDDVVMGTLTVRENLQFSAALRLPKAMKTHEKNERINTIIKELGLDKVADSKVGTQFTRGISGGERKRTSIGMELITDPSILFLDEPTTGLDSSTANAVLLLLKRMSKQGRTIIFSIHQPRYSIFKLFDSLTLLASGKLMFHGPAQKALEYFASAGYHCEPYNNPADFFLDVINGDSSAVMLNRGEQDHEANKTEEPSKREKPIIENLAEFYINSTIYGETKAELDQLPVAQKKKGSSAFREPVYVTSFCHQLRWIARRSFKNLLGNPQASVAQLIVTVILGLIIGALYFGLKNDPTGMQNRAGVFFFLTTNQCFTSVSAVELFVVEKKLFIHEYISGYYRVSSYFFGKLVSDLLPMRFLPSVIYTCILYFMLGLKRTVEAFFIMMFTLIMVAYTASSMALAIAAGQSVVSVATLLMTISFVFMMLFSGLLVNLRTIGPWLSWLQYFSIPRYGFTALQHNEFLGQEFCPGLNVTMNSTCVNSYTICTGNDYLINQGIDLSPWGLWRNHVALACMIIIFLTIAYLKLLFLKKYS.

The interval 1 to 25 (MSSSNDHVLVPMSQRNKNGLPGMSS) is disordered. Residues 1–395 (MSSSNDHVLV…KNLLGNPQAS (395 aa)) lie on the Cytoplasmic side of the membrane. Residues 48–285 (VKSGFLVRKT…FASAGYHCEP (238 aa)) form the ABC transporter domain. ATP-binding positions include 79-86 (GPTGGGKS), 183-189 (RGISGGE), E210, and H242. In terms of domain architecture, ABC transmembrane type-2 spans 389–653 (LGNPQASVAQ…TIAYLKLLFL (265 aa)). The helical transmembrane segment at 396–416 (VAQLIVTVILGLIIGALYFGL) threads the bilayer. Residues 417-428 (KNDPTGMQNRAG) lie on the Extracellular side of the membrane. A helical membrane pass occupies residues 429 to 449 (VFFFLTTNQCFTSVSAVELFV). Over 450–477 (VEKKLFIHEYISGYYRVSSYFFGKLVSD) the chain is Cytoplasmic. Residues 478–498 (LLPMRFLPSVIYTCILYFMLG) form a helical membrane-spanning segment. The Extracellular portion of the chain corresponds to 499–506 (LKRTVEAF). A helical transmembrane segment spans residues 507–527 (FIMMFTLIMVAYTASSMALAI). The Cytoplasmic segment spans residues 528–535 (AAGQSVVS). Residues 536–556 (VATLLMTISFVFMMLFSGLLV) traverse the membrane as a helical segment. The Extracellular segment spans residues 557-632 (NLRTIGPWLS…LSPWGLWRNH (76 aa)). Cysteines 592 and 610 form a disulfide. Residues N596 and N600 are each glycosylated (N-linked (GlcNAc...) asparagine). A helical membrane pass occupies residues 633–653 (VALACMIIIFLTIAYLKLLFL). The Cytoplasmic segment spans residues 654-657 (KKYS).

The protein belongs to the ABC transporter superfamily. ABCG family. Eye pigment precursor importer (TC 3.A.1.204) subfamily. As to quaternary structure, homodimer; disulfide-linked. The minimal functional unit is a homodimer, but the major oligomeric form in plasma membrane is a homotetramer with possibility of higher order oligomerization up to homododecamers. N-glycosylated in brain capillary, kidney and small intestine but not in heart. Post-translationally, N-glycosylated. Glycosylation-deficient ABCG2 is normally expressed and functional. In terms of processing, phosphorylated. Phosphorylation may regulate the localization to the plasma membrane, the homooligomerization and therefore, the activity of the transporter. Highly expressed in brain capillary, kidney and small intestine. Lower expression in heart. Preferentially expressed (at protein level) on the luminal membrane of brain capillaries, in kidney and small intestine.

The protein resides in the cell membrane. Its subcellular location is the apical cell membrane. The protein localises to the mitochondrion membrane. The catalysed reaction is ATP + H2O + xenobioticSide 1 = ADP + phosphate + xenobioticSide 2.. It carries out the reaction urate(in) + ATP + H2O = urate(out) + ADP + phosphate + H(+). The enzyme catalyses indoxyl sulfate(in) + ATP + H2O = indoxyl sulfate(out) + ADP + phosphate + H(+). It catalyses the reaction sphing-4-enine 1-phosphate(in) + ATP + H2O = sphing-4-enine 1-phosphate(out) + ADP + phosphate + H(+). The catalysed reaction is estrone 3-sulfate(in) + ATP + H2O = estrone 3-sulfate(out) + ADP + phosphate + H(+). It carries out the reaction dehydroepiandrosterone 3-sulfate(in) + ATP + H2O = dehydroepiandrosterone 3-sulfate(out) + ADP + phosphate + H(+). The enzyme catalyses 4-methylumbelliferone sulfate(in) + ATP + H2O = 4-methylumbelliferone sulfate(out) + ADP + phosphate + H(+). It catalyses the reaction 5,7-dimethyl-2-methylamino-4-(3-pyridylmethyl)-1,3-benzothiazol-6-yl beta-D-glucuronate(in) + ATP + H2O = 5,7-dimethyl-2-methylamino-4-(3-pyridylmethyl)-1,3-benzothiazol-6-yl beta-D-glucuronate(out) + ADP + phosphate + H(+). The catalysed reaction is 4-methylumbelliferone beta-D-glucuronate(in) + ATP + H2O = 4-methylumbelliferone beta-D-glucuronate(out) + ADP + phosphate + H(+). It carries out the reaction 5,7-dimethyl-2-methylamino-4-(3-pyridylmethyl)-1,3-benzothiazol-6-yl sulfate(in) + ATP + H2O = 5,7-dimethyl-2-methylamino-4-(3-pyridylmethyl)-1,3-benzothiazol-6-yl sulfate(out) + ADP + phosphate + H(+). The enzyme catalyses 17beta-estradiol 17-O-(beta-D-glucuronate)(in) + ATP + H2O = 17beta-estradiol 17-O-(beta-D-glucuronate)(out) + ADP + phosphate + H(+). It catalyses the reaction methotrexate(in) + ATP + H2O = methotrexate(out) + ADP + phosphate + H(+). The catalysed reaction is riboflavin(in) + ATP + H2O = riboflavin(out) + ADP + phosphate + H(+). It carries out the reaction pheophorbide a(in) + ATP + H2O = pheophorbide a(out) + ADP + phosphate + H(+). The enzyme catalyses itaconate(in) + ATP + H2O = itaconate(out) + ADP + phosphate + H(+). Its function is as follows. Broad substrate specificity ATP-dependent transporter of the ATP-binding cassette (ABC) family that actively extrudes a wide variety of physiological compounds, dietary toxins and xenobiotics from cells. Involved in porphyrin homeostasis, mediating the export of protoporphyrin IX (PPIX) from both mitochondria to cytosol and cytosol to extracellular space, it also functions in the cellular export of heme. Also mediates the efflux of sphingosine-1-P from cells. Acts as a urate exporter functioning in both renal and extrarenal urate excretion. In kidney, it also functions as a physiological exporter of the uremic toxin indoxyl sulfate. Also involved in the excretion of steroids like estrone 3-sulfate/E1S, 3beta-sulfooxy-androst-5-en-17-one/DHEAS, and other sulfate conjugates. Mediates the secretion of the riboflavin and biotin vitamins into milk. Extrudes pheophorbide a, a phototoxic porphyrin catabolite of chlorophyll, reducing its bioavailability. Plays an important role in the exclusion of xenobiotics from the brain. It confers to cells a resistance to multiple drugs and other xenobiotics including mitoxantrone, pheophorbide, camptothecin, methotrexate, azidothymidine, and the anthracyclines daunorubicin and doxorubicin, through the control of their efflux. In placenta, it limits the penetration of drugs from the maternal plasma into the fetus. May play a role in early stem cell self-renewal by blocking differentiation. In inflammatory macrophages, exports itaconate from the cytosol to the extracellular compartment and limits the activation of TFEB-dependent lysosome biogenesis involved in antibacterial innate immune response. The polypeptide is Broad substrate specificity ATP-binding cassette transporter ABCG2 (Abcg2) (Rattus norvegicus (Rat)).